The chain runs to 64 residues: Insect toxin OsI1 (64 aa).

An LCN-type CS-alpha/beta domain is found at 1–61 (DGYPKQKDGC…MWKYETNTCG (61 aa)). 4 disulfides stabilise this stretch: Cys-10–Cys-60, Cys-14–Cys-35, Cys-21–Cys-42, and Cys-25–Cys-44. The residue at position 61 (Gly-61) is a Glycine amide.

Belongs to the long (4 C-C) scorpion toxin superfamily. Sodium channel inhibitor family. Beta subfamily. Expressed by the venom gland.

The protein resides in the secreted. In terms of biological role, depressant insect beta-toxins cause a transient contraction paralysis followed by a slow flaccid paralysis. They bind voltage-independently at site-4 of sodium channels (Nav) and shift the voltage of activation toward more negative potentials thereby affecting sodium channel activation and promoting spontaneous and repetitive firing. This toxin is active only on insects. This is Insect toxin OsI1 from Orthochirus scrobiculosus (Central Asian scorpion).